We begin with the raw amino-acid sequence, 208 residues long: Small ribosomal subunit protein uS4 (208 aa).

The S4 RNA-binding domain occupies 98 to 161 (RRLDNVVYRL…RKIPVLAEAQ (64 aa)).

This sequence belongs to the universal ribosomal protein uS4 family. As to quaternary structure, part of the 30S ribosomal subunit. Contacts protein S5. The interaction surface between S4 and S5 is involved in control of translational fidelity.

Its function is as follows. One of the primary rRNA binding proteins, it binds directly to 16S rRNA where it nucleates assembly of the body of the 30S subunit. With S5 and S12 plays an important role in translational accuracy. This is Small ribosomal subunit protein uS4 from Desulfovibrio desulfuricans (strain ATCC 27774 / DSM 6949 / MB).